Here is a 340-residue protein sequence, read N- to C-terminus: MYRNWRDLISPKKLQVESETLTNKYGKFYAEPFERGFGTTLGNSLRRVLLSSLQGAGITSVRIKGVLHEFSSIPGVTEDVTNIILNLKGVSLKMYGTEPKTVRIIHKGDGIITAGDIITDPQVEILNPEHHIATCSKDANLEMEMVVKVGKGYVPADRNRDEKAPVGTIPIDALFSPIRKVNFTVSNARVGQMTDYDKLTLEVWTNGSVIPEDAVAFAAKILKEQLSIFINFDEEAEPSGEAEVGEGESPINENLYRSVDELELSVRSANCLKNAGIKLIGELVSRTEAEMLKTQNFGRKSLNEIKDILAEMGLTLGMKLEGFPDPEVMRRLRGERKDEE.

An alpha N-terminal domain (alpha-NTD) region spans residues 1 to 233; the sequence is MYRNWRDLIS…EQLSIFINFD (233 aa). An alpha C-terminal domain (alpha-CTD) region spans residues 251–340; that stretch reads INENLYRSVD…RLRGERKDEE (90 aa).

It belongs to the RNA polymerase alpha chain family. Homodimer. The RNAP catalytic core consists of 2 alpha, 1 beta, 1 beta' and 1 omega subunit. When a sigma factor is associated with the core the holoenzyme is formed, which can initiate transcription.

It catalyses the reaction RNA(n) + a ribonucleoside 5'-triphosphate = RNA(n+1) + diphosphate. Functionally, DNA-dependent RNA polymerase catalyzes the transcription of DNA into RNA using the four ribonucleoside triphosphates as substrates. The polypeptide is DNA-directed RNA polymerase subunit alpha (Geobacter sulfurreducens (strain ATCC 51573 / DSM 12127 / PCA)).